Reading from the N-terminus, the 197-residue chain is Histone chaperone asf1b-B (197 aa).

The protein belongs to the ASF1 family. Interacts with histone H3 and histone H4.

It is found in the nucleus. Its function is as follows. Histone chaperone that facilitates histone deposition and histone exchange and removal during nucleosome assembly and disassembly. The polypeptide is Histone chaperone asf1b-B (asf1bb) (Danio rerio (Zebrafish)).